The primary structure comprises 245 residues: 3-deoxy-manno-octulosonate cytidylyltransferase (245 aa).

It belongs to the KdsB family.

The protein resides in the cytoplasm. The catalysed reaction is 3-deoxy-alpha-D-manno-oct-2-ulosonate + CTP = CMP-3-deoxy-beta-D-manno-octulosonate + diphosphate. It participates in nucleotide-sugar biosynthesis; CMP-3-deoxy-D-manno-octulosonate biosynthesis; CMP-3-deoxy-D-manno-octulosonate from 3-deoxy-D-manno-octulosonate and CTP: step 1/1. It functions in the pathway bacterial outer membrane biogenesis; lipopolysaccharide biosynthesis. In terms of biological role, activates KDO (a required 8-carbon sugar) for incorporation into bacterial lipopolysaccharide in Gram-negative bacteria. In Rhodopseudomonas palustris (strain HaA2), this protein is 3-deoxy-manno-octulosonate cytidylyltransferase.